The following is a 201-amino-acid chain: Keratin-associated protein 4-12 (201 aa).

A run of 30 repeats spans residues 5–9 (CCGSV), 20–24 (CCRPS), 25–29 (CCQTT), 30–34 (CCRTT), 35–39 (CCRPS), 40–44 (CCVSS), 45–49 (CCRPQ), 50–54 (CCQSV), 55–59 (CCQPT), 60–64 (CCRPS), 65–69 (CCQTT), 70–74 (CCRTT), 75–79 (CCRPS), 80–84 (CCVSS), 85–89 (CCRPQ), 90–94 (CCQSV), 95–99 (CCQPT), 100–104 (CCRPS), 105–109 (CCQTT), 110–114 (CCRTT), 115–119 (CCRPS), 120–124 (CCVSS), 125–129 (CCRPQ), 130–134 (CCQSV), 135–139 (CCQPT), 140–144 (CCRPS), 145–149 (CCISS), 155–159 (CCESS), 160–164 (CCRPC), and 165–169 (CCLRP). The tract at residues 5 to 169 (CCGSVCSDQG…CCRPCCCLRP (165 aa)) is 31 X 5 AA repeats of C-C-[GRQVIL]-[SPTR]-[VSTQPC].

It belongs to the KRTAP type 4 family. As to quaternary structure, interacts with hair keratins. As to expression, expressed in the hair follicles.

In terms of biological role, in the hair cortex, hair keratin intermediate filaments are embedded in an interfilamentous matrix, consisting of hair keratin-associated proteins (KRTAP), which are essential for the formation of a rigid and resistant hair shaft through their extensive disulfide bond cross-linking with abundant cysteine residues of hair keratins. The matrix proteins include the high-sulfur and high-glycine-tyrosine keratins. The sequence is that of Keratin-associated protein 4-12 (KRTAP4-12) from Homo sapiens (Human).